The following is an 875-amino-acid chain: Alanine--tRNA ligase (875 aa).

His-564, His-568, Cys-666, and His-670 together coordinate Zn(2+).

The protein belongs to the class-II aminoacyl-tRNA synthetase family. Homotetramer. Zn(2+) is required as a cofactor.

It is found in the cytoplasm. It carries out the reaction tRNA(Ala) + L-alanine + ATP = L-alanyl-tRNA(Ala) + AMP + diphosphate. Functionally, catalyzes the attachment of alanine to tRNA(Ala) in a two-step reaction: alanine is first activated by ATP to form Ala-AMP and then transferred to the acceptor end of tRNA(Ala). Also edits incorrectly charged Ser-tRNA(Ala) and Gly-tRNA(Ala) via its editing domain. The polypeptide is Alanine--tRNA ligase (Yersinia pseudotuberculosis serotype O:1b (strain IP 31758)).